The sequence spans 216 residues: ATP-dependent Clp protease proteolytic subunit (216 aa).

The active-site Nucleophile is the Ser-101. The active site involves His-126.

The protein belongs to the peptidase S14 family. As to quaternary structure, component of the chloroplastic Clp protease core complex.

It localises to the plastid. It is found in the chloroplast stroma. The catalysed reaction is Hydrolysis of proteins to small peptides in the presence of ATP and magnesium. alpha-casein is the usual test substrate. In the absence of ATP, only oligopeptides shorter than five residues are hydrolyzed (such as succinyl-Leu-Tyr-|-NHMec, and Leu-Tyr-Leu-|-Tyr-Trp, in which cleavage of the -Tyr-|-Leu- and -Tyr-|-Trp bonds also occurs).. In terms of biological role, cleaves peptides in various proteins in a process that requires ATP hydrolysis. Has a chymotrypsin-like activity. Plays a major role in the degradation of misfolded proteins. This Oryza nivara (Indian wild rice) protein is ATP-dependent Clp protease proteolytic subunit.